Here is a 379-residue protein sequence, read N- to C-terminus: Cytochrome b (379 aa).

Helical transmembrane passes span 33 to 53, 77 to 98, 113 to 133, and 178 to 198; these read FGSL…FLAM, WLIR…FIHV, WNIG…GYVL, and FFAF…VHLL. Heme b is bound by residues histidine 83 and histidine 97. 2 residues coordinate heme b: histidine 182 and histidine 196. Residue histidine 201 coordinates a ubiquinone. A run of 4 helical transmembrane segments spans residues 226 to 246, 288 to 308, 320 to 340, and 347 to 367; these read TKDL…ALFF, LGGV…PLLN, ITQV…WIGG, and FTMI…ILIP.

It belongs to the cytochrome b family. In terms of assembly, the cytochrome bc1 complex contains 11 subunits: 3 respiratory subunits (MT-CYB, CYC1 and UQCRFS1), 2 core proteins (UQCRC1 and UQCRC2) and 6 low-molecular weight proteins (UQCRH/QCR6, UQCRB/QCR7, UQCRQ/QCR8, UQCR10/QCR9, UQCR11/QCR10 and a cleavage product of UQCRFS1). This cytochrome bc1 complex then forms a dimer. The cofactor is heme b.

It localises to the mitochondrion inner membrane. Component of the ubiquinol-cytochrome c reductase complex (complex III or cytochrome b-c1 complex) that is part of the mitochondrial respiratory chain. The b-c1 complex mediates electron transfer from ubiquinol to cytochrome c. Contributes to the generation of a proton gradient across the mitochondrial membrane that is then used for ATP synthesis. The polypeptide is Cytochrome b (MT-CYB) (Akodon spegazzinii (Spegazzini's grass mouse)).